We begin with the raw amino-acid sequence, 412 residues long: DNA polymerase IV (412 aa).

One can recognise a UmuC domain in the interval 12 to 193; that stretch reads ILHVDMNCFF…LPVGAMHGIG (182 aa). The Mg(2+) site is built by Asp-16 and Asp-112. Residue Glu-113 is part of the active site. The tract at residues 235–257 is disordered; sequence KGMDDREVDPSQMGQHKSVGNSM. Polar residues predominate over residues 246–257; the sequence is QMGQHKSVGNSM.

Belongs to the DNA polymerase type-Y family. In terms of assembly, monomer. It depends on Mg(2+) as a cofactor.

It localises to the cytoplasm. It catalyses the reaction DNA(n) + a 2'-deoxyribonucleoside 5'-triphosphate = DNA(n+1) + diphosphate. Poorly processive, error-prone DNA polymerase involved in untargeted mutagenesis. Copies undamaged DNA at stalled replication forks, which arise in vivo from mismatched or misaligned primer ends. These misaligned primers can be extended by PolIV. Exhibits no 3'-5' exonuclease (proofreading) activity. May be involved in translesional synthesis, in conjunction with the beta clamp from PolIII. The polypeptide is DNA polymerase IV (Bacillus anthracis).